The primary structure comprises 162 residues: MQCPYCHHTDSRVLESRSAEGGQSIRRRRECLACGRRFTTYERIEFVPITVIKRNGDRESFDRSKLLRGIMTACGKTNIPQQKIEALVDDIEADLQLRSRREVTSAELGEAALQRLRHLSEVAYVRFASVYRQFQGISDFVAELAHLQETPASPELLTISQS.

A zinc finger lies at 3-34 (CPYCHHTDSRVLESRSAEGGQSIRRRRECLAC). In terms of domain architecture, ATP-cone spans 49 to 139 (ITVIKRNGDR…VYRQFQGISD (91 aa)).

This sequence belongs to the NrdR family. It depends on Zn(2+) as a cofactor.

Negatively regulates transcription of bacterial ribonucleotide reductase nrd genes and operons by binding to NrdR-boxes. The protein is Transcriptional repressor NrdR of Thermosynechococcus vestitus (strain NIES-2133 / IAM M-273 / BP-1).